The following is a 71-amino-acid chain: Cytotoxic linear peptide IsCT2 (71 aa).

The first 23 residues, Met-1–Ala-23, serve as a signal peptide directing secretion. At Phe-36 the chain carries Phenylalanine amide. A propeptide spanning residues Ala-40–Arg-71 is cleaved from the precursor.

The protein belongs to the non-disulfide-bridged peptide (NDBP) superfamily. Short antimicrobial peptide (group 4) family. Post-translationally, isCT2F is an enzymatic proteolytic cleavage product of IsCT2 by the proteases present in the venom. As to expression, expressed by the venom gland.

Its subcellular location is the secreted. The protein resides in the target cell membrane. In terms of biological role, isCT2 shows weak hemolytic activity and antibacterial activity against both Gram-positive and Gram-negative bacteria probably by forming pores in the cell membrane. IsCT2 adopts an amphipathic alpha-helical structure. IsCT2f shows neither hemolytic, nor antibacterial activities, surely due to the fact that it cannot apply amphipathic alpha-helical structure. The protein is Cytotoxic linear peptide IsCT2 of Opisthacanthus madagascariensis (Scorpion).